The chain runs to 268 residues: Tryptophan synthase alpha chain (268 aa).

Active-site proton acceptor residues include glutamate 49 and aspartate 60.

This sequence belongs to the TrpA family. As to quaternary structure, tetramer of two alpha and two beta chains.

It catalyses the reaction (1S,2R)-1-C-(indol-3-yl)glycerol 3-phosphate + L-serine = D-glyceraldehyde 3-phosphate + L-tryptophan + H2O. It functions in the pathway amino-acid biosynthesis; L-tryptophan biosynthesis; L-tryptophan from chorismate: step 5/5. Its function is as follows. The alpha subunit is responsible for the aldol cleavage of indoleglycerol phosphate to indole and glyceraldehyde 3-phosphate. This is Tryptophan synthase alpha chain from Escherichia coli O157:H7.